A 431-amino-acid chain; its full sequence is Maintenance of mitochondrial morphology protein 1 (431 aa).

Residues methionine 1–glycine 103 lie on the Lumenal side of the membrane. The chain crosses the membrane as a helical span at residues leucine 104–phenylalanine 124. Residues threonine 125 to serine 431 lie on the Cytoplasmic side of the membrane. Residues serine 192–proline 404 enclose the SMP-LTD domain. The segment at asparagine 412 to serine 431 is disordered.

Belongs to the MMM1 family. In terms of assembly, homodimer. Component of the ER-mitochondria encounter structure (ERMES) or MDM complex, composed of MMM1, MDM10, MDM12 and MDM34. An MMM1 homodimer associates with one molecule of MDM12 on each side in a pairwise head-to-tail manner, and the SMP-LTD domains of MMM1 and MDM12 generate a continuous hydrophobic tunnel for phospholipid trafficking.

It is found in the endoplasmic reticulum membrane. Functionally, component of the ERMES/MDM complex, which serves as a molecular tether to connect the endoplasmic reticulum (ER) and mitochondria. Components of this complex are involved in the control of mitochondrial shape and protein biogenesis, and function in nonvesicular lipid trafficking between the ER and mitochondria. The MDM12-MMM1 subcomplex functions in the major beta-barrel assembly pathway that is responsible for biogenesis of all outer membrane beta-barrel proteins, and acts in a late step after the SAM complex. The MDM10-MDM12-MMM1 subcomplex further acts in the TOM40-specific pathway after the action of the MDM12-MMM1 complex. Essential for establishing and maintaining the structure of mitochondria and maintenance of mtDNA nucleoids. This is Maintenance of mitochondrial morphology protein 1 from Candida glabrata (strain ATCC 2001 / BCRC 20586 / JCM 3761 / NBRC 0622 / NRRL Y-65 / CBS 138) (Yeast).